The chain runs to 428 residues: Serine--tRNA ligase (428 aa).

An L-serine-binding site is contributed by 231-233; that stretch reads TAE. Residues 262–264 and Val278 contribute to the ATP site; that span reads RRE. Glu285 contributes to the L-serine binding site. ATP is bound at residue 349-352; that stretch reads EVSS. Position 384 (Ser384) interacts with L-serine.

Belongs to the class-II aminoacyl-tRNA synthetase family. Type-1 seryl-tRNA synthetase subfamily. As to quaternary structure, homodimer. The tRNA molecule binds across the dimer.

The protein localises to the cytoplasm. It catalyses the reaction tRNA(Ser) + L-serine + ATP = L-seryl-tRNA(Ser) + AMP + diphosphate + H(+). The enzyme catalyses tRNA(Sec) + L-serine + ATP = L-seryl-tRNA(Sec) + AMP + diphosphate + H(+). The protein operates within aminoacyl-tRNA biosynthesis; selenocysteinyl-tRNA(Sec) biosynthesis; L-seryl-tRNA(Sec) from L-serine and tRNA(Sec): step 1/1. Its function is as follows. Catalyzes the attachment of serine to tRNA(Ser). Is also able to aminoacylate tRNA(Sec) with serine, to form the misacylated tRNA L-seryl-tRNA(Sec), which will be further converted into selenocysteinyl-tRNA(Sec). This Chlamydia muridarum (strain MoPn / Nigg) protein is Serine--tRNA ligase.